Consider the following 586-residue polypeptide: Tetratricopeptide repeat protein 39B (586 aa).

3 TPR repeats span residues 292–325 (SIILFYAARIDILKGRFEQAQETFQKCIVSQQEW), 483–516 (CLVQLLKGVCLKHLGRLLQAELCFNQVIQSEKRV), and 524–557 (PFTFYELGLLYKEQGDRDKAIRYIETAKGNYKDY).

Belongs to the TTC39 family.

Functionally, may be involved in lipid metabolism. The polypeptide is Tetratricopeptide repeat protein 39B (ttc39b) (Xenopus laevis (African clawed frog)).